Reading from the N-terminus, the 208-residue chain is Large ribosomal subunit protein uL3c (208 aa).

A disordered region spans residues Thr129–Leu165.

Belongs to the universal ribosomal protein uL3 family. In terms of assembly, part of the 50S ribosomal subunit.

Its subcellular location is the plastid. The protein resides in the chloroplast. One of the primary rRNA binding proteins, it binds directly near the 3'-end of the 23S rRNA, where it nucleates assembly of the 50S subunit. In Rhodomonas salina (Cryptomonas salina), this protein is Large ribosomal subunit protein uL3c (rpl3).